A 217-amino-acid chain; its full sequence is UPF0319 protein VS_II0881 (217 aa).

A signal peptide spans 1–21; sequence MKTIQSIALLSAIVAAPSVLA.

Belongs to the UPF0319 family.

The protein is UPF0319 protein VS_II0881 of Vibrio atlanticus (strain LGP32) (Vibrio splendidus (strain Mel32)).